A 172-amino-acid chain; its full sequence is 3-phenylpropionate/cinnamic acid dioxygenase subunit beta (172 aa).

The protein belongs to the bacterial ring-hydroxylating dioxygenase beta subunit family. In terms of assembly, this dioxygenase system consists of four proteins: the two subunits of the hydroxylase component (HcaE and HcaF), a ferredoxin (HcaC) and a ferredoxin reductase (HcaD).

It carries out the reaction 3-phenylpropanoate + NADH + O2 + H(+) = 3-(cis-5,6-dihydroxycyclohexa-1,3-dien-1-yl)propanoate + NAD(+). The catalysed reaction is (E)-cinnamate + NADH + O2 + H(+) = (2E)-3-(cis-5,6-dihydroxycyclohexa-1,3-dien-1-yl)prop-2-enoate + NAD(+). It functions in the pathway aromatic compound metabolism; 3-phenylpropanoate degradation. In terms of biological role, part of the multicomponent 3-phenylpropionate dioxygenase. Converts 3-phenylpropionic acid (PP) and cinnamic acid (CI) into 3-phenylpropionate-dihydrodiol (PP-dihydrodiol) and cinnamic acid-dihydrodiol (CI-dihydrodiol), respectively. This chain is 3-phenylpropionate/cinnamic acid dioxygenase subunit beta, found in Escherichia coli O139:H28 (strain E24377A / ETEC).